The following is a 64-amino-acid chain: Orcokinin peptides (64 aa).

Propeptides lie at residues 1–6 and 23–24; these read MNIRPG and NI.

It belongs to the orcokinin family. As to expression, orcokinin-3 is expressed throughout the central nervous system (at protein level).

The protein resides in the secreted. Functionally, myotropic peptides. The sequence is that of Orcokinin peptides from Camponotus floridanus (Florida carpenter ant).